The primary structure comprises 290 residues: ATP synthase gamma chain (290 aa).

Belongs to the ATPase gamma chain family. As to quaternary structure, F-type ATPases have 2 components, CF(1) - the catalytic core - and CF(0) - the membrane proton channel. CF(1) has five subunits: alpha(3), beta(3), gamma(1), delta(1), epsilon(1). CF(0) has three main subunits: a, b and c.

Its subcellular location is the cell inner membrane. Functionally, produces ATP from ADP in the presence of a proton gradient across the membrane. The gamma chain is believed to be important in regulating ATPase activity and the flow of protons through the CF(0) complex. The sequence is that of ATP synthase gamma chain from Dictyoglomus thermophilum (strain ATCC 35947 / DSM 3960 / H-6-12).